Consider the following 214-residue polypeptide: Adenylate kinase (214 aa).

Residue 10–15 (GAGKGT) coordinates ATP. The NMP stretch occupies residues 30–59 (STGDMLRAAVKAGTPLGLEAKKVMDAGQLV). AMP contacts are provided by residues threonine 31, arginine 36, 57-59 (QLV), 85-88 (GFPR), and glutamine 92. The interval 122 to 159 (GRRVHPGSGRVYHIVFNQPKVEGKDDVTGEDLAIRPDD) is LID. ATP is bound by residues arginine 123 and 132 to 133 (VY). Residues arginine 156 and arginine 167 each coordinate AMP. Position 200 (glutamine 200) interacts with ATP.

Belongs to the adenylate kinase family. Monomer.

It is found in the cytoplasm. It carries out the reaction AMP + ATP = 2 ADP. Its pathway is purine metabolism; AMP biosynthesis via salvage pathway; AMP from ADP: step 1/1. In terms of biological role, catalyzes the reversible transfer of the terminal phosphate group between ATP and AMP. Plays an important role in cellular energy homeostasis and in adenine nucleotide metabolism. This chain is Adenylate kinase, found in Shewanella piezotolerans (strain WP3 / JCM 13877).